The chain runs to 196 residues: ATP-dependent Clp protease proteolytic subunit (196 aa).

Ser101 (nucleophile) is an active-site residue. His126 is a catalytic residue.

It belongs to the peptidase S14 family. Component of the chloroplastic Clp protease core complex.

It is found in the plastid. It localises to the chloroplast stroma. It carries out the reaction Hydrolysis of proteins to small peptides in the presence of ATP and magnesium. alpha-casein is the usual test substrate. In the absence of ATP, only oligopeptides shorter than five residues are hydrolyzed (such as succinyl-Leu-Tyr-|-NHMec, and Leu-Tyr-Leu-|-Tyr-Trp, in which cleavage of the -Tyr-|-Leu- and -Tyr-|-Trp bonds also occurs).. Cleaves peptides in various proteins in a process that requires ATP hydrolysis. Has a chymotrypsin-like activity. Plays a major role in the degradation of misfolded proteins. This chain is ATP-dependent Clp protease proteolytic subunit, found in Aethionema cordifolium (Lebanon stonecress).